We begin with the raw amino-acid sequence, 320 residues long: Pyrroline-5-carboxylate reductase 2 (320 aa).

The residue at position 2 (Ser2) is an N-acetylserine. NADP(+)-binding positions include Ile6–Leu11 and Ser34. Residues Ala8, Gln10, Leu11, Ser34, Glu36, Asn56, Val70, Lys71, and Ala97 each coordinate NADPH. Residues Asn56, Ala69–Pro72, and Cys95–Ala97 contribute to the NADP(+) site. Glu164 provides a ligand contact to L-proline. Residue Asn230 participates in NADPH binding. 2 residues coordinate L-proline: Ala237 and Thr238. Residues Thr298–Asp320 form a disordered region. Ser304 is modified (phosphoserine).

It belongs to the pyrroline-5-carboxylate reductase family. Homodecamer; composed of 5 homodimers. Interacts with LTO1.

It localises to the cytoplasm. The protein localises to the mitochondrion. The catalysed reaction is L-proline + NADP(+) = (S)-1-pyrroline-5-carboxylate + NADPH + 2 H(+). It carries out the reaction L-proline + NAD(+) = (S)-1-pyrroline-5-carboxylate + NADH + 2 H(+). The protein operates within amino-acid biosynthesis; L-proline biosynthesis; L-proline from L-glutamate 5-semialdehyde: step 1/1. Functionally, oxidoreductase that catalyzes the last step in proline biosynthesis, which corresponds to the reduction of pyrroline-5-carboxylate to L-proline using NAD(P)H. At physiologic concentrations, has higher specific activity in the presence of NADH. Involved in cellular response to oxidative stress. In some cell types, such as erythrocytes, its primary function may be the generation of NADP(+). In Bos taurus (Bovine), this protein is Pyrroline-5-carboxylate reductase 2 (PYCR2).